A 494-amino-acid chain; its full sequence is Alpha-amylase-related protein (494 aa).

The N-terminal stretch at 1–20 (MIKFALALTLCLAGASLSLA) is a signal peptide. A Pyrrolidone carboxylic acid modification is found at glutamine 21. Cysteine 48 and cysteine 104 form a disulfide bridge. Residues asparagine 118, glutamine 169, and aspartate 178 each coordinate Ca(2+). Cysteine 157 and cysteine 171 form a disulfide bridge. Residue arginine 206 coordinates chloride. Catalysis depends on aspartate 208, which acts as the Nucleophile. Position 212 (histidine 212) interacts with Ca(2+). Glutamate 245 (proton donor) is an active-site residue. Positions 308 and 343 each coordinate chloride. 3 disulfides stabilise this stretch: cysteine 376-cysteine 382, cysteine 418-cysteine 441, and cysteine 448-cysteine 460.

It belongs to the glycosyl hydrolase 13 family. As to quaternary structure, monomer. The cofactor is Ca(2+). Requires chloride as cofactor.

It localises to the secreted. It carries out the reaction Endohydrolysis of (1-&gt;4)-alpha-D-glucosidic linkages in polysaccharides containing three or more (1-&gt;4)-alpha-linked D-glucose units.. The protein is Alpha-amylase-related protein (Amyrel) of Drosophila lini (Fruit fly).